An 807-amino-acid polypeptide reads, in one-letter code: Glycerol-3-phosphate acyltransferase (807 aa).

Residues 305–310 carry the HXXXXD motif motif; it reads CHRSHM.

The protein belongs to the GPAT/DAPAT family.

Its subcellular location is the cell inner membrane. The catalysed reaction is sn-glycerol 3-phosphate + an acyl-CoA = a 1-acyl-sn-glycero-3-phosphate + CoA. It functions in the pathway phospholipid metabolism; CDP-diacylglycerol biosynthesis; CDP-diacylglycerol from sn-glycerol 3-phosphate: step 1/3. This Klebsiella pneumoniae (strain 342) protein is Glycerol-3-phosphate acyltransferase.